A 156-amino-acid chain; its full sequence is ATP synthase subunit b (156 aa).

A helical transmembrane segment spans residues 12 to 32; that stretch reads VAFLIFVLFCMKYVWPPVITA.

This sequence belongs to the ATPase B chain family. As to quaternary structure, F-type ATPases have 2 components, F(1) - the catalytic core - and F(0) - the membrane proton channel. F(1) has five subunits: alpha(3), beta(3), gamma(1), delta(1), epsilon(1). F(0) has three main subunits: a(1), b(2) and c(10-14). The alpha and beta chains form an alternating ring which encloses part of the gamma chain. F(1) is attached to F(0) by a central stalk formed by the gamma and epsilon chains, while a peripheral stalk is formed by the delta and b chains.

Its subcellular location is the cell inner membrane. F(1)F(0) ATP synthase produces ATP from ADP in the presence of a proton or sodium gradient. F-type ATPases consist of two structural domains, F(1) containing the extramembraneous catalytic core and F(0) containing the membrane proton channel, linked together by a central stalk and a peripheral stalk. During catalysis, ATP synthesis in the catalytic domain of F(1) is coupled via a rotary mechanism of the central stalk subunits to proton translocation. Its function is as follows. Component of the F(0) channel, it forms part of the peripheral stalk, linking F(1) to F(0). This chain is ATP synthase subunit b, found in Pseudomonas putida (strain GB-1).